A 531-amino-acid polypeptide reads, in one-letter code: Light-independent protochlorophyllide reductase subunit B (531 aa).

Residue Asp-36 coordinates [4Fe-4S] cluster. Catalysis depends on Asp-287, which acts as the Proton donor. 422–423 (GL) contributes to the substrate binding site.

This sequence belongs to the ChlB/BchB/BchZ family. As to quaternary structure, protochlorophyllide reductase is composed of three subunits; BchL, BchN and BchB. Forms a heterotetramer of two BchB and two BchN subunits. It depends on [4Fe-4S] cluster as a cofactor.

The catalysed reaction is chlorophyllide a + oxidized 2[4Fe-4S]-[ferredoxin] + 2 ADP + 2 phosphate = protochlorophyllide a + reduced 2[4Fe-4S]-[ferredoxin] + 2 ATP + 2 H2O. The protein operates within porphyrin-containing compound metabolism; bacteriochlorophyll biosynthesis (light-independent). Component of the dark-operative protochlorophyllide reductase (DPOR) that uses Mg-ATP and reduced ferredoxin to reduce ring D of protochlorophyllide (Pchlide) to form chlorophyllide a (Chlide). This reaction is light-independent. The NB-protein (BchN-BchB) is the catalytic component of the complex. This chain is Light-independent protochlorophyllide reductase subunit B, found in Rhodopseudomonas palustris (strain BisA53).